Consider the following 159-residue polypeptide: Probable cyclic pyranopterin monophosphate synthase (159 aa).

Substrate is bound by residues 75 to 77 (LCH) and 111 to 112 (ME). D126 is a catalytic residue.

The protein belongs to the MoaC family. As to quaternary structure, homohexamer; trimer of dimers.

The catalysed reaction is (8S)-3',8-cyclo-7,8-dihydroguanosine 5'-triphosphate = cyclic pyranopterin phosphate + diphosphate. The protein operates within cofactor biosynthesis; molybdopterin biosynthesis. In terms of biological role, catalyzes the conversion of (8S)-3',8-cyclo-7,8-dihydroguanosine 5'-triphosphate to cyclic pyranopterin monophosphate (cPMP). This Pyrococcus horikoshii (strain ATCC 700860 / DSM 12428 / JCM 9974 / NBRC 100139 / OT-3) protein is Probable cyclic pyranopterin monophosphate synthase.